The primary structure comprises 295 residues: Trimeric intracellular cation channel type A (295 aa).

Over Met1–Lys18 the chain is Lumenal. A helical membrane pass occupies residues Leu19 to Tyr39. The Cytoplasmic segment spans residues Glu40 to Pro51. A helical membrane pass occupies residues Val52–Leu72. The Lumenal segment spans residues Leu73–Asn84. Residue Gly74 participates in Ca(2+) binding. A helical membrane pass occupies residues Ala85–Phe105. Topologically, residues Tyr106–Gly144 are cytoplasmic. The a 1,2-diacyl-sn-glycero-3-phospho-(1D-myo-inositol-4,5-bisphosphate) site is built by Lys122 and Arg126. The helical transmembrane segment at Trp145–Leu165 threads the bilayer. Residues Glu166–Asn178 lie on the Lumenal side of the membrane. A helical transmembrane segment spans residues Glu179 to Leu199. Residues Gln200–Gln201 are Cytoplasmic-facing. The helical transmembrane segment at Ala202–Val222 threads the bilayer. Residues Cys223–His233 lie on the Lumenal side of the membrane. A helical membrane pass occupies residues Gly234 to Gly254. Over Asp255–Glu295 the chain is Cytoplasmic. A disordered region spans residues Asp258–Glu295. Positions Asp267–Thr286 are enriched in basic and acidic residues.

The protein belongs to the TMEM38 family. As to quaternary structure, homotrimer; conformation seems to be controled by binding to diacylglycerol (DAG).

It is found in the sarcoplasmic reticulum membrane. The protein localises to the nucleus membrane. The catalysed reaction is K(+)(in) = K(+)(out). With respect to regulation, channel activity is activated by a change of voltage within the sarcoplasmic reticulum lumen and blocked by luminal high Ca(2+) levels. Functionally, intracellular monovalent cation channel required for maintenance of rapid intracellular calcium release. Acts as a potassium counter-ion channel that functions in synchronization with calcium release from intracellular stores. Opened by a change of voltage within the sarcoplasmic reticulum lumen. This Xenopus laevis (African clawed frog) protein is Trimeric intracellular cation channel type A (tmem38a).